The sequence spans 123 residues: Large ribosomal subunit protein bL12 (123 aa).

This sequence belongs to the bacterial ribosomal protein bL12 family. As to quaternary structure, homodimer. Part of the ribosomal stalk of the 50S ribosomal subunit. Forms a multimeric L10(L12)X complex, where L10 forms an elongated spine to which 2 to 4 L12 dimers bind in a sequential fashion. Binds GTP-bound translation factors.

Its function is as follows. Forms part of the ribosomal stalk which helps the ribosome interact with GTP-bound translation factors. Is thus essential for accurate translation. This chain is Large ribosomal subunit protein bL12, found in Rickettsia bellii (strain OSU 85-389).